The sequence spans 164 residues: FMN reductase (NADH) RutF (164 aa).

This sequence belongs to the non-flavoprotein flavin reductase family. RutF subfamily.

The enzyme catalyses FMNH2 + NAD(+) = FMN + NADH + 2 H(+). Functionally, catalyzes the reduction of FMN to FMNH2 which is used to reduce pyrimidine by RutA via the Rut pathway. This chain is FMN reductase (NADH) RutF, found in Klebsiella variicola (strain At-22).